The chain runs to 54 residues: Large ribosomal subunit protein bL33 (54 aa).

It belongs to the bacterial ribosomal protein bL33 family.

This is Large ribosomal subunit protein bL33 from Corynebacterium diphtheriae (strain ATCC 700971 / NCTC 13129 / Biotype gravis).